A 230-amino-acid chain; its full sequence is Preflagellin peptidase (230 aa).

Residue Met-1 is a topological domain, cytoplasmic. A helical transmembrane segment spans residues 2-18 (IEYIIGALGLIIASVQD). Residues 19–23 (FRSRE) are Extracellular-facing. The helical transmembrane segment at 24–46 (IEDYIWIFLAVFGVLFAIYSSIT) threads the bilayer. Residues 47 to 49 (LLD) are Cytoplasmic-facing. Residues 50–72 (YSILINSISGFVICFILGYMMFL) traverse the membrane as a helical segment. Over 73-78 (SGIGGG) the chain is Extracellular. The helical transmembrane segment at 79-89 (DGKMLIGLGAL) threads the bilayer. Over 90-110 (VPKFQMPIYTSLGTLLNLNYV) the chain is Cytoplasmic. Residues 111–139 (PTFPIMVFINGIFFMVFLPFVILFRNILN) form a helical membrane-spanning segment. Residues 140–204 (GARPKTGKEF…EEIWVTPQIP (65 aa)) are Extracellular-facing. A helical transmembrane segment spans residues 205 to 216 (LIIPITLSYLVT). Topologically, residues 217–230 (PIIGDRILDFLIPF) are cytoplasmic.

The protein belongs to the peptidase A24 family. Archaeal preflagellin peptidase subfamily.

The protein resides in the cell membrane. It catalyses the reaction Cleaves the signal peptide of 3 to 12 amino acids from the N-terminal of preflagellin, usually at Arg-Gly-|- or Lys-Gly-|-, to release flagellin.. Cleaves the N-terminal leader peptide from preflagellins. The chain is Preflagellin peptidase (flaK) from Methanococcus maripaludis (strain C6 / ATCC BAA-1332).